The sequence spans 307 residues: tRNA dimethylallyltransferase 2 (307 aa).

9–16 (GPTAVGKT) lines the ATP pocket. Residue 11-16 (TAVGKT) participates in substrate binding. An interaction with substrate tRNA region spans residues 34–37 (DSRQ).

This sequence belongs to the IPP transferase family. In terms of assembly, monomer. It depends on Mg(2+) as a cofactor.

The catalysed reaction is adenosine(37) in tRNA + dimethylallyl diphosphate = N(6)-dimethylallyladenosine(37) in tRNA + diphosphate. Its function is as follows. Catalyzes the transfer of a dimethylallyl group onto the adenine at position 37 in tRNAs that read codons beginning with uridine, leading to the formation of N6-(dimethylallyl)adenosine (i(6)A). In Azobacteroides pseudotrichonymphae genomovar. CFP2, this protein is tRNA dimethylallyltransferase 2.